Consider the following 290-residue polypeptide: Serpentine receptor class U-26 (290 aa).

7 consecutive transmembrane segments (helical) span residues 31–51 (LPMLFLLVPILYIPITIIIIL), 70–90 (LLSAISISQCMCLLFFLADFL), 112–134 (FITILTIFTYHINYSTMIFPFLV), 158–178 (FSIPFICVYPIIFTFFMFPAI), 185–205 (AYPFPFGAIIFRIERTFFGLV), 213–233 (NTLFWMTCCIITNFILLLLLI), and 262–282 (MIFSYLSNAMIVFLLLELHIV).

Belongs to the nematode receptor-like protein sru family.

The protein localises to the membrane. This is Serpentine receptor class U-26 (sru-26) from Caenorhabditis elegans.